The chain runs to 184 residues: Photosystem I assembly protein Ycf4 (184 aa).

A run of 2 helical transmembrane segments spans residues 22 to 42 (FCWA…GTSS) and 57 to 77 (ILFF…LFIS).

This sequence belongs to the Ycf4 family.

The protein resides in the plastid. It localises to the chloroplast thylakoid membrane. Functionally, seems to be required for the assembly of the photosystem I complex. This chain is Photosystem I assembly protein Ycf4, found in Phalaenopsis aphrodite subsp. formosana (Moth orchid).